The primary structure comprises 144 residues: uncharacterized protein (144 aa).

A signal peptide spans 1–16 (MRKFLIVLLLPLLVLA).

This is an uncharacterized protein from Aquifex aeolicus (strain VF5).